The sequence spans 354 residues: Chaperone protein dnaJ 49 (354 aa).

Residues 99–163 (DYYAILGLEK…NSRRQFDQVG (65 aa)) enclose the J domain. Residues 237 to 257 (CLTIIQILPFFLLLLLAYLPF) form a helical membrane-spanning segment.

Belongs to the DnaJ family. C/III subfamily.

The protein resides in the membrane. Its function is as follows. Plays a continuous role in plant development probably in the structural organization of compartments. The sequence is that of Chaperone protein dnaJ 49 (ATJ49) from Arabidopsis thaliana (Mouse-ear cress).